Here is a 119-residue protein sequence, read N- to C-terminus: Putative mating-type protein A2 (119 aa).

Residues 38–100 (KPYRGHRFTK…NRRRKEKTIT (63 aa)) constitute a DNA-binding region (homeobox; TALE-type).

This sequence belongs to the TALE/M-ATYP homeobox family.

Its subcellular location is the nucleus. Functionally, probably not a functional protein. Cells lacking A2 show no obvious alterations in mating, sporulation and cell growth. In Saccharomyces cerevisiae (Baker's yeast), this protein is Putative mating-type protein A2 (MATA2).